The sequence spans 382 residues: Ribosomal RNA large subunit methyltransferase G (382 aa).

It belongs to the methyltransferase superfamily. RlmG family.

Its subcellular location is the cytoplasm. It catalyses the reaction guanosine(1835) in 23S rRNA + S-adenosyl-L-methionine = N(2)-methylguanosine(1835) in 23S rRNA + S-adenosyl-L-homocysteine + H(+). Its function is as follows. Specifically methylates the guanine in position 1835 (m2G1835) of 23S rRNA. In Aliivibrio fischeri (strain ATCC 700601 / ES114) (Vibrio fischeri), this protein is Ribosomal RNA large subunit methyltransferase G.